A 156-amino-acid chain; its full sequence is Arginine repressor (156 aa).

Belongs to the ArgR family.

The protein localises to the cytoplasm. It participates in amino-acid biosynthesis; L-arginine biosynthesis [regulation]. In terms of biological role, regulates arginine biosynthesis genes. This Shigella boydii serotype 18 (strain CDC 3083-94 / BS512) protein is Arginine repressor.